The following is a 338-amino-acid chain: Ketol-acid reductoisomerase (NADP(+)) (338 aa).

One can recognise a KARI N-terminal Rossmann domain in the interval 1–181; that stretch reads MQVYYDKDCD…GGGRTGIIET (181 aa). NADP(+) is bound by residues 24–27, Arg-47, Ser-50, Ser-52, and 82–85; these read FGSQ and DEFQ. His-107 is a catalytic residue. Gly-133 serves as a coordination point for NADP(+). The region spanning 182 to 327 is the KARI C-terminal knotted domain; sequence TFRDECETDL…RKLRAMMPWI (146 aa). Mg(2+) contacts are provided by Asp-190, Glu-194, Glu-226, and Glu-230. Residue Ser-251 coordinates substrate.

The protein belongs to the ketol-acid reductoisomerase family. Requires Mg(2+) as cofactor.

It carries out the reaction (2R)-2,3-dihydroxy-3-methylbutanoate + NADP(+) = (2S)-2-acetolactate + NADPH + H(+). It catalyses the reaction (2R,3R)-2,3-dihydroxy-3-methylpentanoate + NADP(+) = (S)-2-ethyl-2-hydroxy-3-oxobutanoate + NADPH + H(+). The protein operates within amino-acid biosynthesis; L-isoleucine biosynthesis; L-isoleucine from 2-oxobutanoate: step 2/4. It functions in the pathway amino-acid biosynthesis; L-valine biosynthesis; L-valine from pyruvate: step 2/4. In terms of biological role, involved in the biosynthesis of branched-chain amino acids (BCAA). Catalyzes an alkyl-migration followed by a ketol-acid reduction of (S)-2-acetolactate (S2AL) to yield (R)-2,3-dihydroxy-isovalerate. In the isomerase reaction, S2AL is rearranged via a Mg-dependent methyl migration to produce 3-hydroxy-3-methyl-2-ketobutyrate (HMKB). In the reductase reaction, this 2-ketoacid undergoes a metal-dependent reduction by NADPH to yield (R)-2,3-dihydroxy-isovalerate. The protein is Ketol-acid reductoisomerase (NADP(+)) of Hydrogenovibrio crunogenus (strain DSM 25203 / XCL-2) (Thiomicrospira crunogena).